Here is a 240-residue protein sequence, read N- to C-terminus: ATP synthase subunit a (240 aa).

The next 5 membrane-spanning stretches (helical) occupy residues Leu21–Phe41, Ala83–Ile103, Asp116–Val136, Leu184–Ile204, and Leu207–Leu227.

It belongs to the ATPase A chain family. As to quaternary structure, F-type ATPases have 2 components, CF(1) - the catalytic core - and CF(0) - the membrane proton channel. CF(1) has five subunits: alpha(3), beta(3), gamma(1), delta(1), epsilon(1). CF(0) has three main subunits: a(1), b(2) and c(9-12). The alpha and beta chains form an alternating ring which encloses part of the gamma chain. CF(1) is attached to CF(0) by a central stalk formed by the gamma and epsilon chains, while a peripheral stalk is formed by the delta and b chains.

It is found in the cell membrane. Key component of the proton channel; it plays a direct role in the translocation of protons across the membrane. This Macrococcus caseolyticus (strain JCSC5402) (Macrococcoides caseolyticum) protein is ATP synthase subunit a.